The sequence spans 244 residues: MKLNFSGLRALVTGAGKGIGRDTVKALHASGAKVVAVTRTNSDLVSLAKECPGIEPVCVDLGDWDATEKALGGIGPVDLLVNNAALVIMQPFLEVTKEAFDRSFSVNLRSVFQVSQMVARDMINRGVPGSIVNVSSMVAHVTFPNLITYSSTKGAMTMLTKAMAMELGPHKIRVNSVNPTVVLTDMGKKVSADPEFARKLKERHPLRKFAEVEDVVNSILFLLSDRSASTSGGGILVDAGYLAS.

11-39 (LVTGAGKGIGRDTVKALHASGAKVVAVTR) contributes to the NADP(+) binding site. Ser42 is subject to Phosphoserine. Residue Ser136 coordinates substrate. Tyr149 acts as the Proton acceptor in catalysis. The residue at position 176 (Ser176) is a Phosphoserine.

It belongs to the short-chain dehydrogenases/reductases (SDR) family. As to quaternary structure, homotetramer. In terms of tissue distribution, predominantly expressed in lung, in ciliated cells, non-ciliated bronchiolar cells and type-II alveolar pneumocytes. Also detected in adipose tissue (at protein level). Low expression in testis, heart, kidney, spleen, brain and liver.

Its subcellular location is the mitochondrion matrix. It carries out the reaction a secondary alcohol + NADP(+) = a ketone + NADPH + H(+). May function in the pulmonary metabolism of endogenous carbonyl compounds, such as aliphatic aldehydes and ketones derived from lipid peroxidation, 3-ketosteroids and fatty aldehydes, as well as in xenobiotic metabolism. This chain is Carbonyl reductase [NADPH] 2 (Cbr2), found in Mus musculus (Mouse).